A 187-amino-acid polypeptide reads, in one-letter code: Ribosome-recycling factor (187 aa).

This sequence belongs to the RRF family.

It localises to the cytoplasm. Functionally, responsible for the release of ribosomes from messenger RNA at the termination of protein biosynthesis. May increase the efficiency of translation by recycling ribosomes from one round of translation to another. In Flavobacterium johnsoniae (strain ATCC 17061 / DSM 2064 / JCM 8514 / BCRC 14874 / CCUG 350202 / NBRC 14942 / NCIMB 11054 / UW101) (Cytophaga johnsonae), this protein is Ribosome-recycling factor.